The primary structure comprises 760 residues: BMP/retinoic acid-inducible neural-specific protein 1 (760 aa).

The first 16 residues, 1-16 (MNWRFVELLYFLFVWG), serve as a signal peptide directing secretion. The MACPF domain maps to 68-251 (RYKIYREFAR…FVQSALSYIM (184 aa)). N-linked (GlcNAc...) asparagine glycosylation is found at N156, N433, N443, N553, N599, N630, and N676.

It belongs to the BRINP family.

The protein localises to the cytoplasm. Plays a role in neurogenesis and brain development. May suppress cell cycle progression in postmitotic neurons by inhibiting G1/S transition. The polypeptide is BMP/retinoic acid-inducible neural-specific protein 1 (Brinp1) (Rattus norvegicus (Rat)).